The following is a 2488-amino-acid chain: PKS-NRPS hybrid synthetase swnK (2488 aa).

Residues 33–422 are adenylation (A) domain; it reads FEQVADRFPD…GRIDGVVKIR (390 aa). Residues 523-598 enclose the Carrier 1 domain; sequence QPTSELEQRI…ALAAYLAGTG (76 aa). Serine 558 carries the O-(pantetheine 4'-phosphoryl)serine modification. Positions 616-1039 constitute a Ketosynthase family 3 (KS3) domain; it reads HEDIAIVSMA…GTNAHVIVEE (424 aa). Catalysis depends on for beta-ketoacyl synthase activity residues cysteine 785, histidine 920, and histidine 960. Residues 1149-1471 are malonyl-CoA:ACP transacylase (MAT) domain; it reads LFTGQGSQLP…SLSELHVRHV (323 aa). Residues 1723–1901 are ketoreductase (KR) domain; the sequence is GAVLVTGGLG…ASSVAYGTWA (179 aa). Residues 2002–2077 enclose the Carrier 2 domain; it reads SIVLHMVQAT…SLSEFLLCRL (76 aa). The residue at position 2037 (serine 2037) is an O-(pantetheine 4'-phosphoryl)serine. The disordered stretch occupies residues 2084 to 2103; sequence STSSPSDTDGATPSTPTSAA. The thioester reductase (TE) domain stretch occupies residues 2136-2364; the sequence is VTGATGFVGT…VLPVDYLCGT (229 aa).

It in the N-terminal section; belongs to the NRP synthetase family.

The enzyme catalyses L-pipecolate + malonyl-CoA + 2 NADPH + 4 H(+) = (8aS)-octahydroindolizin-1-one + CO2 + 2 NADP(+) + CoA + 2 H2O. It carries out the reaction L-pipecolate + malonyl-CoA + 3 NADPH + 5 H(+) = (1R,8aS)-octahydroindolizin-1-ol + CO2 + 3 NADP(+) + CoA + 2 H2O. The catalysed reaction is L-pipecolate + malonyl-CoA + 3 NADPH + 5 H(+) = (1S,8aS)-octahydroindolizin-1-ol + CO2 + 3 NADP(+) + CoA + 2 H2O. The protein operates within mycotoxin biosynthesis. Functionally, PKS-NRPS hybrid synthetase; part of the gene cluster that mediates the biosynthesis of swainsonine (SW), a cytotoxic fungal alkaloid and a potential cancer therapy drug. Swainsonine production occurs via a multibranched pathway and is dispensable for fungal colonization of plants and infection of insect hosts. The first step of swainsonine biosynthesis is the production of the precursor pipecolic acid (PA) via conversion of L-lysine (Lys) to 1-piperideine-6-carboxylate (P6C) by the aminotransferase swnA, the latter being further reduced to PA by the reductase swnR. PA can be converted from lysine by both the SW biosynthetic cluster and the unclustered genes such as lysine cyclodeaminase. The PKS-NRPS hybrid synthetase swnK uptakes and condensates PA and malonyl-CoA with and without skipping of the ketoreductase (KR) domain in order to produce 3 intermediates, 1-oxoindolizidine, (1S)-1-hydroxyindolizin, and (1R)-1-hydroxyindolizine; with the transisomer (1S)-1-hydroxyindolizin being predominant. The terminal thioester reductase (TE) domain of swnK is involved in reduction of the thioester bond to release the intermediate aldehydes. The oxidoreductase swnN could contribute to the reduction of 1-oxoindolizidine to (1S)-1-hydroxyindolizin and (1R)-1-hydroxyindolizine, contributing to the major route of SW production. The dioxygenase swnH2 would be responsible for the oxidization of (1R)-1-hydroxyindolizine into (1R,2S)-1,2-dihydroxyindolizine and of (1S)-1-hydroxyindolizin to yield both (1R,2S)-1,2-dihydroxyindolizine and (1S,2S)-1,2-dihydroxyindolizine. The dioxygenase swnH1 then performs the conversion of the 1,2-dihydroxyindolizine epimers to SW. The chain is PKS-NRPS hybrid synthetase swnK from Metarhizium robertsii (strain ARSEF 23 / ATCC MYA-3075) (Metarhizium anisopliae (strain ARSEF 23)).